A 414-amino-acid polypeptide reads, in one-letter code: Histidine--tRNA ligase (414 aa).

This sequence belongs to the class-II aminoacyl-tRNA synthetase family. In terms of assembly, homodimer.

It is found in the cytoplasm. It catalyses the reaction tRNA(His) + L-histidine + ATP = L-histidyl-tRNA(His) + AMP + diphosphate + H(+). This chain is Histidine--tRNA ligase, found in Ehrlichia ruminantium (strain Welgevonden).